We begin with the raw amino-acid sequence, 78 residues long: Large ribosomal subunit protein bL28 (78 aa).

It belongs to the bacterial ribosomal protein bL28 family.

The sequence is that of Large ribosomal subunit protein bL28 from Microcystis aeruginosa (strain NIES-843 / IAM M-2473).